We begin with the raw amino-acid sequence, 368 residues long: Chaperone protein DnaJ (368 aa).

The J domain maps to 5-70 (DYYQVLGVPR…KKRKLYDTHG (66 aa)). The CR-type zinc-finger motif lies at 124–201 (GVERQIQIPT…CNGAGRVEDH (78 aa)). Residues Cys-137, Cys-140, Cys-153, Cys-156, Cys-175, Cys-178, Cys-189, and Cys-192 each contribute to the Zn(2+) site. 4 CXXCXGXG motif repeats span residues 137–144 (CTHCNGSG), 153–160 (CGTCRGSG), 175–182 (CPHCGGRG), and 189–196 (CKVCNGAG).

The protein belongs to the DnaJ family. Homodimer. Zn(2+) serves as cofactor.

It localises to the cytoplasm. Functionally, participates actively in the response to hyperosmotic and heat shock by preventing the aggregation of stress-denatured proteins and by disaggregating proteins, also in an autonomous, DnaK-independent fashion. Unfolded proteins bind initially to DnaJ; upon interaction with the DnaJ-bound protein, DnaK hydrolyzes its bound ATP, resulting in the formation of a stable complex. GrpE releases ADP from DnaK; ATP binding to DnaK triggers the release of the substrate protein, thus completing the reaction cycle. Several rounds of ATP-dependent interactions between DnaJ, DnaK and GrpE are required for fully efficient folding. Also involved, together with DnaK and GrpE, in the DNA replication of plasmids through activation of initiation proteins. In Xylella fastidiosa (strain M12), this protein is Chaperone protein DnaJ.